Consider the following 418-residue polypeptide: Glutamyl-tRNA reductase (418 aa).

Substrate-binding positions include 49–52 (TCNR), Ser107, 112–114 (EPQ), and Gln118. Residue Cys50 is the Nucleophile of the active site. Position 187-192 (187-192 (GAGETI)) interacts with NADP(+).

The protein belongs to the glutamyl-tRNA reductase family. In terms of assembly, homodimer.

It catalyses the reaction (S)-4-amino-5-oxopentanoate + tRNA(Glu) + NADP(+) = L-glutamyl-tRNA(Glu) + NADPH + H(+). The protein operates within porphyrin-containing compound metabolism; protoporphyrin-IX biosynthesis; 5-aminolevulinate from L-glutamyl-tRNA(Glu): step 1/2. Catalyzes the NADPH-dependent reduction of glutamyl-tRNA(Glu) to glutamate 1-semialdehyde (GSA). The protein is Glutamyl-tRNA reductase of Pseudoalteromonas translucida (strain TAC 125).